We begin with the raw amino-acid sequence, 66 residues long: DNA-directed RNA polymerase subunit Rpo10 (66 aa).

Residues C7, C10, C47, and C48 each contribute to the Zn(2+) site.

Belongs to the archaeal Rpo10/eukaryotic RPB10 RNA polymerase subunit family. As to quaternary structure, part of the RNA polymerase complex. It depends on Zn(2+) as a cofactor.

The protein localises to the cytoplasm. The enzyme catalyses RNA(n) + a ribonucleoside 5'-triphosphate = RNA(n+1) + diphosphate. Functionally, DNA-dependent RNA polymerase (RNAP) catalyzes the transcription of DNA into RNA using the four ribonucleoside triphosphates as substrates. The sequence is that of DNA-directed RNA polymerase subunit Rpo10 from Haloarcula marismortui (strain ATCC 43049 / DSM 3752 / JCM 8966 / VKM B-1809) (Halobacterium marismortui).